The sequence spans 277 residues: 4-hydroxy-3-methylbut-2-enyl diphosphate reductase (277 aa).

Cysteine 12 contacts [4Fe-4S] cluster. (2E)-4-hydroxy-3-methylbut-2-enyl diphosphate-binding residues include histidine 36 and histidine 70. Histidine 36 and histidine 70 together coordinate dimethylallyl diphosphate. Isopentenyl diphosphate is bound by residues histidine 36 and histidine 70. Cysteine 92 contributes to the [4Fe-4S] cluster binding site. Position 120 (histidine 120) interacts with (2E)-4-hydroxy-3-methylbut-2-enyl diphosphate. Dimethylallyl diphosphate is bound at residue histidine 120. Residue histidine 120 participates in isopentenyl diphosphate binding. Residue glutamate 122 is the Proton donor of the active site. Threonine 158 serves as a coordination point for (2E)-4-hydroxy-3-methylbut-2-enyl diphosphate. Cysteine 186 contributes to the [4Fe-4S] cluster binding site. (2E)-4-hydroxy-3-methylbut-2-enyl diphosphate contacts are provided by serine 214, asparagine 216, and serine 258. Dimethylallyl diphosphate-binding residues include serine 214, asparagine 216, and serine 258. Isopentenyl diphosphate contacts are provided by serine 214, asparagine 216, and serine 258.

The protein belongs to the IspH family. Requires [4Fe-4S] cluster as cofactor.

It carries out the reaction isopentenyl diphosphate + 2 oxidized [2Fe-2S]-[ferredoxin] + H2O = (2E)-4-hydroxy-3-methylbut-2-enyl diphosphate + 2 reduced [2Fe-2S]-[ferredoxin] + 2 H(+). The enzyme catalyses dimethylallyl diphosphate + 2 oxidized [2Fe-2S]-[ferredoxin] + H2O = (2E)-4-hydroxy-3-methylbut-2-enyl diphosphate + 2 reduced [2Fe-2S]-[ferredoxin] + 2 H(+). Its pathway is isoprenoid biosynthesis; dimethylallyl diphosphate biosynthesis; dimethylallyl diphosphate from (2E)-4-hydroxy-3-methylbutenyl diphosphate: step 1/1. The protein operates within isoprenoid biosynthesis; isopentenyl diphosphate biosynthesis via DXP pathway; isopentenyl diphosphate from 1-deoxy-D-xylulose 5-phosphate: step 6/6. Catalyzes the conversion of 1-hydroxy-2-methyl-2-(E)-butenyl 4-diphosphate (HMBPP) into a mixture of isopentenyl diphosphate (IPP) and dimethylallyl diphosphate (DMAPP). Acts in the terminal step of the DOXP/MEP pathway for isoprenoid precursor biosynthesis. The chain is 4-hydroxy-3-methylbut-2-enyl diphosphate reductase from Campylobacter jejuni subsp. jejuni serotype O:2 (strain ATCC 700819 / NCTC 11168).